The primary structure comprises 211 residues: N-(5'-phosphoribosyl)anthranilate isomerase (211 aa).

Belongs to the TrpF family.

It catalyses the reaction N-(5-phospho-beta-D-ribosyl)anthranilate = 1-(2-carboxyphenylamino)-1-deoxy-D-ribulose 5-phosphate. The protein operates within amino-acid biosynthesis; L-tryptophan biosynthesis; L-tryptophan from chorismate: step 3/5. In Methanococcus maripaludis (strain C6 / ATCC BAA-1332), this protein is N-(5'-phosphoribosyl)anthranilate isomerase.